We begin with the raw amino-acid sequence, 230 residues long: Acyl-protein thioesterase 1 (230 aa).

Catalysis depends on charge relay system residues Ser-119, Asp-174, and His-208. Lys-224 bears the N6-acetyllysine mark.

It belongs to the AB hydrolase superfamily. AB hydrolase 2 family. As to quaternary structure, homodimer. In terms of tissue distribution, platelets.

The protein localises to the cytoplasm. It is found in the cell membrane. It localises to the nucleus membrane. The protein resides in the endoplasmic reticulum. It carries out the reaction S-hexadecanoyl-L-cysteinyl-[protein] + H2O = L-cysteinyl-[protein] + hexadecanoate + H(+). The catalysed reaction is 1-hexadecanoyl-sn-glycero-3-phosphocholine + H2O = sn-glycerol 3-phosphocholine + hexadecanoate + H(+). It catalyses the reaction a 1-(9Z-octadecenoyl)-2-acyl-sn-glycero-3-phosphocholine + H2O = a 2-acyl-sn-glycero-3-phosphocholine + (9Z)-octadecenoate + H(+). Its activity is regulated as follows. Inhibited by palmostatin-B, leading to impair depalmitoylating of Ras. Functionally, acts as an acyl-protein thioesterase. Hydrolyzes fatty acids from S-acylated cysteine residues in proteins such as trimeric G alpha proteins or HRAS. Acts as a palmitoyl thioesterase that catalyzes depalmitoylation of proteins, such as ADRB2, KCNMA1 and SQSTM1. Acts as a negative regulator of autophagy by mediating palmitoylation of SQSTM1, decreasing affinity between SQSTM1 and ATG8 proteins and recruitment of ubiquitinated cargo proteins to autophagosomes. Acts as a lysophospholipase and hydrolyzes lysophosphatidylcholine (lyso-PC). Also hydrolyzes lysophosphatidylethanolamine (lyso-PE), lysophosphatidylinositol (lyso-PI) and lysophosphatidylserine (lyso-PS). Has much higher thioesterase activity than lysophospholipase activity. Contributes to the production of lysophosphatidic acid (LPA) during blood coagulation by recognizing and cleaving plasma phospholipids to generate lysophospholipids which in turn act as substrates for ENPP2 to produce LPA. The protein is Acyl-protein thioesterase 1 (LYPLA1) of Homo sapiens (Human).